Reading from the N-terminus, the 221-residue chain is GFP-like non-fluorescent chromoprotein (221 aa).

The 2-iminomethyl-5-imidazolinone (Gln-Gly) cross-link spans 62-64 (QYG). A 2,3-didehydrotyrosine modification is found at Tyr63.

It belongs to the GFP family. Homotetramer. In terms of processing, contains a chromophore consisting of modified amino acid residues. The chromophore is formed by autocatalytic backbone condensation between Xaa-N and Gly-(N+2), oxidation of Tyr-(N+1) to didehydrotyrosine, and formation of a double bond to the alpha-amino nitrogen of residue Xaa-N. Maturation of the chromophore requires nothing other than molecular oxygen. The precise stereochemistry of the tyrosine has not been determined.

Functionally, non-fluorescent pigment protein that is lilac in color. The polypeptide is GFP-like non-fluorescent chromoprotein (Goniopora tenuidens (Anemone coral)).